The chain runs to 843 residues: Vacuolar membrane protease (843 aa).

Topologically, residues 1-16 (MTNSRRHIFERICAKA) are cytoplasmic. A helical transmembrane segment spans residues 17 to 37 (FQSSLTCSIFGFTVLLILYLL). Topologically, residues 38–347 (DWKRIAQVPG…LAFGKYWQLN (310 aa)) are vacuolar. Residues asparagine 96, asparagine 109, and asparagine 117 are each glycosylated (N-linked (GlcNAc...) asparagine). Zn(2+) is bound by residues histidine 147 and aspartate 159. Catalysis depends on glutamate 191, which acts as the Proton acceptor. Glutamate 192 is a Zn(2+) binding site. Residue asparagine 209 is glycosylated (N-linked (GlcNAc...) asparagine). Glutamate 217 serves as a coordination point for Zn(2+). A glycan (N-linked (GlcNAc...) asparagine) is linked at asparagine 275. Residue histidine 292 coordinates Zn(2+). N-linked (GlcNAc...) asparagine glycosylation occurs at asparagine 322. Residues 348–368 (LPIYQVLNIIFAVICPIVLLL) traverse the membrane as a helical segment. The Cytoplasmic segment spans residues 369–386 (TLIRFPSLYEQLKKPRYT). Residues 387-407 (VCFVVSCIFVSIFDTLTVLLL) form a helical membrane-spanning segment. The Vacuolar segment spans residues 408–417 (TWINPYVINS). Residues 418–438 (HTGLILALFYLTNLIALAFSF) form a helical membrane-spanning segment. Topologically, residues 439–456 (RAAATHSKLSSEDLSSIE) are cytoplasmic. A helical membrane pass occupies residues 457-477 (IVFIWYAQILWYLVFIVSVIL). At 478 to 484 (SIYFQLG) the chain is on the vacuolar side. The helical transmembrane segment at 485–505 (STYWVTLSYLCTFTCCIMTII) threads the bilayer. Over 506–566 (RINYFVDNVV…NRAHVKLIDN (61 aa)) the chain is Cytoplasmic. The helical transmembrane segment at 567 to 587 (IWTVIYFIFNVPFPVFLCYDI) threads the bilayer. Topologically, residues 588–608 (LVETILPAGSQTLTDSVFSSK) are vacuolar. Residues 609–629 (LYKLVIFVVFLSLVNSGPFIF) traverse the membrane as a helical segment. Residues 630–636 (RALSKKS) are Cytoplasmic-facing. Residues 637 to 657 (LAVLTMLWITLFVQALSVNPF) traverse the membrane as a helical segment. The Vacuolar portion of the chain corresponds to 658–843 (TESAPLKLSF…LLKVKSSIVI (186 aa)). Asparagine 677, asparagine 703, asparagine 707, asparagine 754, and asparagine 788 each carry an N-linked (GlcNAc...) asparagine glycan.

Belongs to the peptidase M28 family. Requires Zn(2+) as cofactor.

It localises to the membrane. Its subcellular location is the vacuole membrane. Its function is as follows. May be involved in vacuolar sorting and osmoregulation. This Schizosaccharomyces pombe (strain 972 / ATCC 24843) (Fission yeast) protein is Vacuolar membrane protease.